Here is a 385-residue protein sequence, read N- to C-terminus: Protein pelota homolog (385 aa).

K162 participates in a covalent cross-link: Glycyl lysine isopeptide (Lys-Gly) (interchain with G-Cter in SUMO2). 4 positions are modified to phosphoserine: S374, S380, S381, and S382.

It belongs to the eukaryotic release factor 1 family. Pelota subfamily. In terms of assembly, component of the Pelota-HBS1L complex, also named Dom34-Hbs1 complex, composed of PELO and HBS1L. Interacts with PINK1. Interacts with ABCE1. Interacts with CNOT4. A divalent metal cation serves as cofactor. As to expression, ubiquitously expressed.

Its subcellular location is the cytoplasm. Its function is as follows. Component of the Pelota-HBS1L complex, a complex that recognizes stalled ribosomes and triggers the No-Go Decay (NGD) pathway. In the Pelota-HBS1L complex, PELO recognizes ribosomes stalled at the 3' end of an mRNA and engages stalled ribosomes by destabilizing mRNA in the mRNA channel. Following mRNA extraction from stalled ribosomes by the SKI complex, the Pelota-HBS1L complex promotes recruitment of ABCE1, which drives the disassembly of stalled ribosomes, followed by degradation of damaged mRNAs as part of the NGD pathway. As part of the PINK1-regulated signaling, upon mitochondrial damage is recruited to the ribosome/mRNA-ribonucleoprotein complex associated to mitochondrial outer membrane thereby enabling the recruitment of autophagy receptors and induction of mitophagy. In Homo sapiens (Human), this protein is Protein pelota homolog.